The sequence spans 498 residues: ATP synthase subunit beta, chloroplastic (498 aa).

T6 bears the Phosphothreonine mark. Residue S13 is modified to Phosphoserine. ATP is bound at residue 172–179; that stretch reads GGAGVGKT.

It belongs to the ATPase alpha/beta chains family. F-type ATPases have 2 components, CF(1) - the catalytic core - and CF(0) - the membrane proton channel. CF(1) has five subunits: alpha(3), beta(3), gamma(1), delta(1), epsilon(1). CF(0) has four main subunits: a(1), b(1), b'(1) and c(9-12).

It is found in the plastid. It localises to the chloroplast thylakoid membrane. The catalysed reaction is ATP + H2O + 4 H(+)(in) = ADP + phosphate + 5 H(+)(out). Functionally, produces ATP from ADP in the presence of a proton gradient across the membrane. The catalytic sites are hosted primarily by the beta subunits. The chain is ATP synthase subunit beta, chloroplastic from Brassica napus (Rape).